We begin with the raw amino-acid sequence, 351 residues long: Outer membrane porin PhoE (351 aa).

A signal peptide spans 1-21 (MKKSTLALVVMGITASASVQA).

The protein belongs to the Gram-negative porin family. As to quaternary structure, homotrimer.

It is found in the cell outer membrane. Its function is as follows. Uptake of inorganic phosphate, phosphorylated compounds, and some other negatively charged solutes. The sequence is that of Outer membrane porin PhoE (phoE) from Citrobacter freundii.